A 249-amino-acid polypeptide reads, in one-letter code: Pyridoxine 5'-phosphate synthase (249 aa).

Asn-7 contacts 3-amino-2-oxopropyl phosphate. Residue 9–10 (DH) participates in 1-deoxy-D-xylulose 5-phosphate binding. Arg-18 serves as a coordination point for 3-amino-2-oxopropyl phosphate. The Proton acceptor role is filled by His-43. Positions 45 and 50 each coordinate 1-deoxy-D-xylulose 5-phosphate. The active-site Proton acceptor is Glu-70. Thr-100 contributes to the 1-deoxy-D-xylulose 5-phosphate binding site. The active-site Proton donor is His-190. 3-amino-2-oxopropyl phosphate contacts are provided by residues Gly-191 and 212–213 (GH).

This sequence belongs to the PNP synthase family. Homooctamer; tetramer of dimers.

The protein resides in the cytoplasm. It catalyses the reaction 3-amino-2-oxopropyl phosphate + 1-deoxy-D-xylulose 5-phosphate = pyridoxine 5'-phosphate + phosphate + 2 H2O + H(+). The protein operates within cofactor biosynthesis; pyridoxine 5'-phosphate biosynthesis; pyridoxine 5'-phosphate from D-erythrose 4-phosphate: step 5/5. Functionally, catalyzes the complicated ring closure reaction between the two acyclic compounds 1-deoxy-D-xylulose-5-phosphate (DXP) and 3-amino-2-oxopropyl phosphate (1-amino-acetone-3-phosphate or AAP) to form pyridoxine 5'-phosphate (PNP) and inorganic phosphate. In Synechococcus sp. (strain CC9311), this protein is Pyridoxine 5'-phosphate synthase.